We begin with the raw amino-acid sequence, 51 residues long: uncharacterized protein (51 aa).

Residues methionine 1–serine 24 are disordered.

This is an uncharacterized protein from Escherichia coli.